The following is a 362-amino-acid chain: Myricetin 3'/5'-O-methyltransferase 1 (362 aa).

Aspartate 229 is a binding site for S-adenosyl-L-methionine. Catalysis depends on histidine 267, which acts as the Proton acceptor.

This sequence belongs to the class I-like SAM-binding methyltransferase superfamily. Cation-independent O-methyltransferase family. As to quaternary structure, homodimer. Mainly expressed in leaves secreting glandular trichomes types 1 and 4 and, to a lesser extent, in storage trichomes type 6.

It catalyses the reaction myricetin + S-adenosyl-L-methionine = laricitrin + S-adenosyl-L-homocysteine + H(+). It carries out the reaction laricitrin + S-adenosyl-L-methionine = syringetin + S-adenosyl-L-homocysteine + H(+). The enzyme catalyses a 3'-hydroxyflavone + S-adenosyl-L-methionine = a 3'-methoxyflavone + S-adenosyl-L-homocysteine + H(+). The catalysed reaction is a 5'-hydroxy-3'-methoxyflavone + S-adenosyl-L-methionine = a 3',5'-dimethoxyflavone + S-adenosyl-L-homocysteine + H(+). It catalyses the reaction quercetin + S-adenosyl-L-methionine = isorhamnetin + S-adenosyl-L-homocysteine + H(+). It carries out the reaction rhamnetin + S-adenosyl-L-methionine = rhamnacene + S-adenosyl-L-homocysteine + H(+). The enzyme catalyses 3',4',5,7-tetrahydroxy-3-methoxyflavone + S-adenosyl-L-methionine = 3,3'-O-dimethylquercetin + S-adenosyl-L-homocysteine + H(+). Its pathway is flavonoid metabolism. Flavonoid 3'/5'-O-methyltransferase involved in the biosynthesis of polymethoxylated flavonoids natural products such as myricetin derivatives, aroma compounds possessing antioxidant properties and exhibiting pharmacological activities such as anti-carcinogen, anti-viral, anti-thrombotic, anti-diabetic, anti-atherosclerotic, and anti-inflammatory effects. Catalyzes S-adenosylmethionine-dependent regioselective 3'/5'-O-methylation of flavonoids; active on various hydroxylated flavonoid substrates, including myricetin and quercetin, but inactive toward kaempferol. Mediates the formation of 3'-methyl derivatives from quercetin, myricetin, 3-methyl quercetin and 7-methyl quercetin (rhamnetin), producing 3'-methyl quercetin (isorhamnetin), 3'-methyl myricetin (laricitrin), 3,3'-dimethyl quercetin (3-O-methylisorhamnetin) and 7,3'-dimethyl quercetin (7-O-methylisorhamnetin), respectively. Triggers the 5'-O-methylation of 3'-methyl myricetin (laricitrin), thus leading to production of 3',5'-dimethyl myricetin (syringetin). This Solanum habrochaites (Wild tomato) protein is Myricetin 3'/5'-O-methyltransferase 1.